Here is a 206-residue protein sequence, read N- to C-terminus: Ras-related protein Ral-A (206 aa).

Residues 24-29, 40-46, and 127-130 each bind GTP; these read GVGKSA, VEDYEPT, and NKSD. The Effector region signature appears at 43–51; the sequence is YEPTKADSY. A (Microbial infection) O-linked (Glc) threonine; by P.sordellii toxin TcsL glycan is attached at Thr-46. Ser-194 is subject to Phosphoserine; by AURKA. Cys-203 bears the Cysteine methyl ester mark. Cys-203 carries the S-geranylgeranyl cysteine lipid modification. Residues 204 to 206 constitute a propeptide, removed in mature form; it reads CIL.

Belongs to the small GTPase superfamily. Ras family. As to quaternary structure, interacts (via effector domain) with RALBP1; during mitosis, recruits RALBP1 to the mitochondrion where it promotes DNM1L phosphorylation and mitochondrial fission. Interacts with EXOC2/Sec5 and EXOC8/Exo84; binding to EXOC2 and EXOC8 is mutually exclusive. Interacts with Clostridium exoenzyme C3. Interacts with RALGPS1. Interacts with LPAR1 and LPAR2. Interacts with GRK2 in response to LPAR1 activation. RALA and GRK2 binding to LPAR1 is mutually exclusive. Interacts with CDC42. Phosphorylated. Phosphorylation at Ser-194 by AURKA/Aurora kinase A, during mitosis, induces RALA localization to the mitochondrion where it regulates mitochondrial fission. In terms of processing, prenylation is essential for membrane localization. The geranylgeranylated form and the farnesylated mutant do not undergo alternative prenylation in response to geranylgeranyltransferase I inhibitors (GGTIs) and farnesyltransferase I inhibitors (FTIs). Post-translationally, (Microbial infection) Glucosylated at Thr-46 by P.sordellii toxin TcsL from strain 6018. Monoglucosylation completely prevents the recognition of the downstream effector, blocking the GTPases in their inactive form. Not glucosylated by TcsL from strain VPI 9048.

It localises to the cell membrane. The protein localises to the cleavage furrow. Its subcellular location is the midbody. It is found in the midbody ring. The protein resides in the mitochondrion. It carries out the reaction GTP + H2O = GDP + phosphate + H(+). With respect to regulation, alternates between an inactive form bound to GDP and an active form bound to GTP. Activated by a guanine nucleotide-exchange factor (GEF) and inactivated by a GTPase-activating protein (GAP). Its function is as follows. Multifunctional GTPase involved in a variety of cellular processes including gene expression, cell migration, cell proliferation, oncogenic transformation and membrane trafficking. Accomplishes its multiple functions by interacting with distinct downstream effectors. Acts as a GTP sensor for GTP-dependent exocytosis of dense core vesicles. The RALA-exocyst complex regulates integrin-dependent membrane raft exocytosis and growth signaling. Key regulator of LPAR1 signaling and competes with GRK2 for binding to LPAR1 thus affecting the signaling properties of the receptor. Required for anchorage-independent proliferation of transformed cells. During mitosis, supports the stabilization and elongation of the intracellular bridge between dividing cells. Cooperates with EXOC2 to recruit other components of the exocyst to the early midbody. During mitosis, also controls mitochondrial fission by recruiting to the mitochondrion RALBP1, which mediates the phosphorylation and activation of DNM1L by the mitotic kinase cyclin B-CDK1. This is Ras-related protein Ral-A (RALA) from Homo sapiens (Human).